The chain runs to 383 residues: Decapping nuclease RAI1 (383 aa).

Residue glutamate 166 coordinates a divalent metal cation. Glutamate 215 serves as a coordination point for substrate. A divalent metal cation is bound by residues aspartate 217, glutamate 235, and leucine 236. 2 residues coordinate substrate: lysine 237 and glutamine 261.

This sequence belongs to the DXO/Dom3Z family. In terms of assembly, interacts with RAT1; the interaction is direct, stabilizes RAT1 protein structure and stimulates its exoribonuclease activity. The interaction also stimulates RAI1 pyrophosphohydrolase activity, probably by recruiting it to mRNA substrates. It depends on a divalent metal cation as a cofactor.

It localises to the nucleus. It catalyses the reaction a 5'-end NAD(+)-phospho-ribonucleoside in mRNA + H2O = a 5'-end phospho-ribonucleoside in mRNA + NAD(+) + H(+). The enzyme catalyses a 5'-end (N(7)-methyl 5'-triphosphoguanosine)-ribonucleoside-ribonucleotide in mRNA + H2O = a (N(7)-methyl 5'-triphosphoguanosine)-nucleoside + a 5'-end phospho-ribonucleoside in mRNA + H(+). The catalysed reaction is a 5'-end triphospho-ribonucleoside in mRNA + H2O = a 5'-end phospho-ribonucleoside in mRNA + diphosphate + H(+). Its function is as follows. Decapping enzyme for NAD-capped RNAs: specifically hydrolyzes the nicotinamide adenine dinucleotide (NAD) cap from a subset of RNAs by removing the entire NAD moiety from the 5'-end of an NAD-capped RNA. The NAD-cap is present at the 5'-end of some RNAs and snoRNAs. In contrast to the canonical 5'-end N7 methylguanosine (m7G) cap, the NAD cap promotes mRNA decay. Also acts as a non-canonical decapping enzyme that removes the entire cap structure of m7G capped or incompletely capped RNAs. Has decapping activity toward incomplete 5'-end m7G cap mRNAs such as unmethylated 5'-end-capped RNA (cap0), while it has no activity toward 2'-O-ribose methylated m7G cap (cap1). Also possesses RNA 5'-pyrophosphohydrolase activity by hydrolyzing the 5'-end triphosphate to release pyrophosphates. Stimulates exoribonuclease activity of Rat1, allowing it to degrade RNAs with stable secondary structure more effectively. The chain is Decapping nuclease RAI1 from Lachancea thermotolerans (strain ATCC 56472 / CBS 6340 / NRRL Y-8284) (Yeast).